A 373-amino-acid chain; its full sequence is MIVLLILSLACTAFTYRLQGFTNAGIVAYKNIQDGNEDDNIVFSPFGYSFSMFMSLLPASGNTKVELLKTMDLRKIDLGPAFTELISGLAKPKTSKYTYTDLTYQSFVDNTVCIKPSYYQQYHRFGLYRLNFRRDAVNKINSIVERRSGMSNVVDSTMLDNNTLWAIINTIYFKGTWQYPFDITKTHNTSFTNKYGTKTVPMMSVVTKLQGNTITIDDEEYDMVRLQYKDANISMYLAIGDNMTHFTDSIMAAKLDYWSSQLGNKVYNLKLPRFSIENKRDIKSIAEMMAPSMFNPDNASFKHMTRDPLYIYKMFQNAKIDVNEQGTVAEASTIMVATVRSSPEELEFNTPFVFIIRHDITGFILFMGKVESP.

Positions methionine 1–threonine 15 are cleaved as a signal peptide.

It belongs to the serpin family. Orthopoxvirus OPG040 subfamily. As to quaternary structure, interacts with A56 protein.

Its subcellular location is the virion membrane. The protein resides in the host cell membrane. Prevents cell to cell fusion via its interaction with A56 protein. The A56-K2 complex associates with components of the entry fusion complex (EFC) presumably to avoid superinfection and syncytium formation. The chain is Superinfection exclusion protein (OPG040) from Homo sapiens (Human).